The sequence spans 249 residues: Triosephosphate isomerase (249 aa).

9 to 11 (NWK) contacts substrate. The active-site Electrophile is the H94. Catalysis depends on E166, which acts as the Proton acceptor. Substrate is bound by residues G172, S211, and 232 to 233 (GG).

It belongs to the triosephosphate isomerase family. As to quaternary structure, homodimer.

It localises to the cytoplasm. The enzyme catalyses D-glyceraldehyde 3-phosphate = dihydroxyacetone phosphate. Its pathway is carbohydrate biosynthesis; gluconeogenesis. It participates in carbohydrate degradation; glycolysis; D-glyceraldehyde 3-phosphate from glycerone phosphate: step 1/1. In terms of biological role, involved in the gluconeogenesis. Catalyzes stereospecifically the conversion of dihydroxyacetone phosphate (DHAP) to D-glyceraldehyde-3-phosphate (G3P). The sequence is that of Triosephosphate isomerase from Moorella thermoacetica (strain ATCC 39073 / JCM 9320).